Consider the following 442-residue polypeptide: Putative toxin YopC (442 aa).

This sequence in the C-terminal section; belongs to the MbcT/ParT/Res family. In terms of assembly, forms a complex with cognate antitoxin YopB.

Its function is as follows. May be the toxic component of a type II toxin-antitoxin (TA) system. Neutralized by its cognate antitoxin YopB. In Bacillus subtilis (strain 168), this protein is Putative toxin YopC (yopC).